The chain runs to 248 residues: Triosephosphate isomerase A (248 aa).

Residues Asn11 and Lys13 each contribute to the substrate site. The active-site Electrophile is the His95. The active-site Proton acceptor is the Glu165.

This sequence belongs to the triosephosphate isomerase family. Homodimer.

Its subcellular location is the cytoplasm. The catalysed reaction is dihydroxyacetone phosphate = methylglyoxal + phosphate. The enzyme catalyses D-glyceraldehyde 3-phosphate = dihydroxyacetone phosphate. The protein operates within carbohydrate degradation; glycolysis; D-glyceraldehyde 3-phosphate from glycerone phosphate: step 1/1. It functions in the pathway carbohydrate biosynthesis; gluconeogenesis. Functionally, triosephosphate isomerase is an extremely efficient metabolic enzyme that catalyzes the interconversion between dihydroxyacetone phosphate (DHAP) and D-glyceraldehyde-3-phosphate (G3P) in glycolysis and gluconeogenesis. It is also responsible for the non-negligible production of methylglyoxal a reactive cytotoxic side-product that modifies and can alter proteins, DNA and lipids. The protein is Triosephosphate isomerase A (tpi1a) of Danio rerio (Zebrafish).